The primary structure comprises 618 residues: tRNA 5-methylaminomethyl-2-thiouridine biosynthesis bifunctional protein MnmC (618 aa).

Residues 1-231 (MLQTYAPIDF…KRHMLSAVYE (231 aa)) form a tRNA (mnm(5)s(2)U34)-methyltransferase region. The interval 256-618 (IGAGIAGATT…KDIIRGHLNN (363 aa)) is FAD-dependent cmnm(5)s(2)U34 oxidoreductase.

This sequence in the N-terminal section; belongs to the methyltransferase superfamily. tRNA (mnm(5)s(2)U34)-methyltransferase family. In the C-terminal section; belongs to the DAO family. The cofactor is FAD.

The protein resides in the cytoplasm. The catalysed reaction is 5-aminomethyl-2-thiouridine(34) in tRNA + S-adenosyl-L-methionine = 5-methylaminomethyl-2-thiouridine(34) in tRNA + S-adenosyl-L-homocysteine + H(+). In terms of biological role, catalyzes the last two steps in the biosynthesis of 5-methylaminomethyl-2-thiouridine (mnm(5)s(2)U) at the wobble position (U34) in tRNA. Catalyzes the FAD-dependent demodification of cmnm(5)s(2)U34 to nm(5)s(2)U34, followed by the transfer of a methyl group from S-adenosyl-L-methionine to nm(5)s(2)U34, to form mnm(5)s(2)U34. This Dichelobacter nodosus (strain VCS1703A) protein is tRNA 5-methylaminomethyl-2-thiouridine biosynthesis bifunctional protein MnmC.